A 242-amino-acid chain; its full sequence is 1-(5-phosphoribosyl)-5-[(5-phosphoribosylamino)methylideneamino] imidazole-4-carboxamide isomerase (242 aa).

The active-site Proton acceptor is the Asp8. The active-site Proton donor is the Asp129.

This sequence belongs to the HisA/HisF family.

It localises to the cytoplasm. The enzyme catalyses 1-(5-phospho-beta-D-ribosyl)-5-[(5-phospho-beta-D-ribosylamino)methylideneamino]imidazole-4-carboxamide = 5-[(5-phospho-1-deoxy-D-ribulos-1-ylimino)methylamino]-1-(5-phospho-beta-D-ribosyl)imidazole-4-carboxamide. The protein operates within amino-acid biosynthesis; L-histidine biosynthesis; L-histidine from 5-phospho-alpha-D-ribose 1-diphosphate: step 4/9. In Dictyoglomus turgidum (strain DSM 6724 / Z-1310), this protein is 1-(5-phosphoribosyl)-5-[(5-phosphoribosylamino)methylideneamino] imidazole-4-carboxamide isomerase.